The sequence spans 298 residues: Ribosomal RNA small subunit methyltransferase H (298 aa).

S-adenosyl-L-methionine-binding positions include 38–40 (GGH), Asp57, Phe84, Asp100, and Gln107.

Belongs to the methyltransferase superfamily. RsmH family.

Its subcellular location is the cytoplasm. It carries out the reaction cytidine(1402) in 16S rRNA + S-adenosyl-L-methionine = N(4)-methylcytidine(1402) in 16S rRNA + S-adenosyl-L-homocysteine + H(+). Functionally, specifically methylates the N4 position of cytidine in position 1402 (C1402) of 16S rRNA. This chain is Ribosomal RNA small subunit methyltransferase H, found in Acaryochloris marina (strain MBIC 11017).